Reading from the N-terminus, the 251-residue chain is MAPAPDPAPAGSAAPDPASAPQGLPAASLLQLIWLASPALPVGGFSYSEGLEIAVECAGVTNESAAAAWLQEQLMLTQARGDLAVVHQALAAWRAGDAERVRALNDWVLHTRETSELRLQTEQMGRSLADWLRNQHAGDAEALSDVARLAALPPTYPVAFALAAARTQARAEDVLLACAFGWAENMVQAAIKAVPLGQSAGQRILARLAAAIPGAVAHAMQLGEAERQAFSPMLAVLSARHETQYSRLFRS.

Residues 1 to 20 (MAPAPDPAPAGSAAPDPASA) are disordered. A compositionally biased stretch (low complexity) spans 9-20 (PAGSAAPDPASA).

This sequence belongs to the UreF family. As to quaternary structure, ureD, UreF and UreG form a complex that acts as a GTP-hydrolysis-dependent molecular chaperone, activating the urease apoprotein by helping to assemble the nickel containing metallocenter of UreC. The UreE protein probably delivers the nickel.

The protein resides in the cytoplasm. Functionally, required for maturation of urease via the functional incorporation of the urease nickel metallocenter. The chain is Urease accessory protein UreF from Paracidovorax citrulli (strain AAC00-1) (Acidovorax citrulli).